Reading from the N-terminus, the 98-residue chain is Citrate lyase acyl carrier protein (98 aa).

Serine 14 carries the O-(phosphoribosyl dephospho-coenzyme A)serine modification.

This sequence belongs to the CitD family. As to quaternary structure, oligomer with a subunit composition of (alpha,beta,gamma)6.

The protein resides in the cytoplasm. Covalent carrier of the coenzyme of citrate lyase. The protein is Citrate lyase acyl carrier protein of Albidiferax ferrireducens (strain ATCC BAA-621 / DSM 15236 / T118) (Rhodoferax ferrireducens).